The primary structure comprises 369 residues: Biglycan (369 aa).

The signal sequence occupies residues 1–16 (MCPLWLLAALLALSQA). Positions 17 to 37 (LPFEQKAFWDFTLDDGLPMLN) are excised as a propeptide. 2 O-linked (Xyl...) (glycosaminoglycan) serine glycosylation sites follow: Ser42 and Ser48. 2 disulfide bridges follow: Cys64–Cys70 and Cys68–Cys77. 12 LRR repeats span residues 83-103 (KAVP…NNDI), 104-127 (SELR…NNKI), 128-151 (SKIH…KNHL), 152-172 (VEIP…DNRI), 173-196 (RKVP…GNPL), 197-221 (ENSG…EAKL), 222-242 (TGIP…HNKI), 243-266 (QAIE…HNQI), 267-290 (RMIE…NNKL), 291-313 (SRVP…TNNI), 314-343 (TKVG…NNPV), and 344-369 (PYWE…NYKK). N-linked (GlcNAc...) asparagine glycans are attached at residues Asn271 and Asn312. Cysteines 322 and 355 form a disulfide.

Belongs to the small leucine-rich proteoglycan (SLRP) family. SLRP class I subfamily. Homodimer. Forms a ternary complex with MFAP2 and ELN. Post-translationally, the two attached glycosaminoglycan chains can be either chondroitin sulfate or dermatan sulfate. In terms of tissue distribution, found in several connective tissues, especially in articular cartilages.

The protein localises to the secreted. It localises to the extracellular space. Its subcellular location is the extracellular matrix. Functionally, may be involved in collagen fiber assembly. This chain is Biglycan (BGN), found in Ovis aries (Sheep).